The sequence spans 336 residues: Holliday junction branch migration complex subunit RuvB (336 aa).

The interval 1–182 (MKERIVNLET…FGMSFRMQFY (182 aa)) is large ATPase domain (RuvB-L). Residues Leu21, Arg22, Gly63, Lys66, Thr67, Ser68, 129–131 (EDF), Arg172, Tyr182, and Arg219 each bind ATP. Thr67 is a binding site for Mg(2+). The interval 183-253 (SPSELSLIIK…ITLHALNELG (71 aa)) is small ATPAse domain (RuvB-S). The tract at residues 256 to 336 (ELGFDEADLA…IPTLNPQTLF (81 aa)) is head domain (RuvB-H). Positions 310 and 315 each coordinate DNA.

It belongs to the RuvB family. In terms of assembly, homohexamer. Forms an RuvA(8)-RuvB(12)-Holliday junction (HJ) complex. HJ DNA is sandwiched between 2 RuvA tetramers; dsDNA enters through RuvA and exits via RuvB. An RuvB hexamer assembles on each DNA strand where it exits the tetramer. Each RuvB hexamer is contacted by two RuvA subunits (via domain III) on 2 adjacent RuvB subunits; this complex drives branch migration. In the full resolvosome a probable DNA-RuvA(4)-RuvB(12)-RuvC(2) complex forms which resolves the HJ.

The protein resides in the cytoplasm. The catalysed reaction is ATP + H2O = ADP + phosphate + H(+). In terms of biological role, the RuvA-RuvB-RuvC complex processes Holliday junction (HJ) DNA during genetic recombination and DNA repair, while the RuvA-RuvB complex plays an important role in the rescue of blocked DNA replication forks via replication fork reversal (RFR). RuvA specifically binds to HJ cruciform DNA, conferring on it an open structure. The RuvB hexamer acts as an ATP-dependent pump, pulling dsDNA into and through the RuvAB complex. RuvB forms 2 homohexamers on either side of HJ DNA bound by 1 or 2 RuvA tetramers; 4 subunits per hexamer contact DNA at a time. Coordinated motions by a converter formed by DNA-disengaged RuvB subunits stimulates ATP hydrolysis and nucleotide exchange. Immobilization of the converter enables RuvB to convert the ATP-contained energy into a lever motion, pulling 2 nucleotides of DNA out of the RuvA tetramer per ATP hydrolyzed, thus driving DNA branch migration. The RuvB motors rotate together with the DNA substrate, which together with the progressing nucleotide cycle form the mechanistic basis for DNA recombination by continuous HJ branch migration. Branch migration allows RuvC to scan DNA until it finds its consensus sequence, where it cleaves and resolves cruciform DNA. This Helicobacter pylori (strain P12) protein is Holliday junction branch migration complex subunit RuvB.